The sequence spans 539 residues: 3-methylmercaptopropionyl-CoA ligase (539 aa).

Threonine 185 lines the Mg(2+) pocket. The ATP site is built by histidine 231, glycine 303, histidine 324, alanine 325, and serine 329. Glutamate 330 serves as a coordination point for Mg(2+). ATP is bound by residues glutamine 359, aspartate 417, arginine 432, and lysine 523.

The protein belongs to the ATP-dependent AMP-binding enzyme family. As to quaternary structure, homodimer. Requires Mg(2+) as cofactor.

The catalysed reaction is 3-(methylsulfanyl)propanoate + ATP + CoA = 3-(methylsulfanyl)propanoyl-CoA + AMP + diphosphate. With respect to regulation, ADP acts as a competitive inhibitor and inhibits the ligase activity. Functionally, involved in the assimilation of dimethylsulphoniopropionate (DMSP), an important compound in the fixation of carbon in marine phytoplankton. Catalyzes the ATP-dependent ligation of methylmercaptopropionate (MMPA) and CoA to yield methylmercaptopropionate-CoA (MMPA-CoA). This Ruegeria lacuscaerulensis (strain DSM 11314 / KCTC 2953 / ITI-1157) (Silicibacter lacuscaerulensis) protein is 3-methylmercaptopropionyl-CoA ligase.